Reading from the N-terminus, the 424-residue chain is Serine hydroxymethyltransferase 2 (424 aa).

(6S)-5,6,7,8-tetrahydrofolate is bound by residues leucine 125 and 129–131; that span reads GHL. Position 234 is an N6-(pyridoxal phosphate)lysine (lysine 234). Glutamate 250 provides a ligand contact to (6S)-5,6,7,8-tetrahydrofolate.

Belongs to the SHMT family. In terms of assembly, homodimer. Pyridoxal 5'-phosphate is required as a cofactor.

The protein localises to the cytoplasm. The enzyme catalyses (6R)-5,10-methylene-5,6,7,8-tetrahydrofolate + glycine + H2O = (6S)-5,6,7,8-tetrahydrofolate + L-serine. The protein operates within one-carbon metabolism; tetrahydrofolate interconversion. It participates in amino-acid biosynthesis; glycine biosynthesis; glycine from L-serine: step 1/1. Its function is as follows. Catalyzes the reversible interconversion of serine and glycine with tetrahydrofolate (THF) serving as the one-carbon carrier. This reaction serves as the major source of one-carbon groups required for the biosynthesis of purines, thymidylate, methionine, and other important biomolecules. Also exhibits THF-independent aldolase activity toward beta-hydroxyamino acids, producing glycine and aldehydes, via a retro-aldol mechanism. This is Serine hydroxymethyltransferase 2 from Ralstonia nicotianae (strain ATCC BAA-1114 / GMI1000) (Ralstonia solanacearum).